We begin with the raw amino-acid sequence, 545 residues long: Chaperonin GroEL 1 (545 aa).

Residues 30–33 (TLGP), K51, 87–91 (DGTTT), G415, and D495 contribute to the ATP site.

This sequence belongs to the chaperonin (HSP60) family. Forms a cylinder of 14 subunits composed of two heptameric rings stacked back-to-back. Interacts with the co-chaperonin GroES.

The protein localises to the cytoplasm. It catalyses the reaction ATP + H2O + a folded polypeptide = ADP + phosphate + an unfolded polypeptide.. Functionally, together with its co-chaperonin GroES, plays an essential role in assisting protein folding. The GroEL-GroES system forms a nano-cage that allows encapsulation of the non-native substrate proteins and provides a physical environment optimized to promote and accelerate protein folding. This is Chaperonin GroEL 1 from Rhizobium etli (strain ATCC 51251 / DSM 11541 / JCM 21823 / NBRC 15573 / CFN 42).